The sequence spans 246 residues: Probable transcriptional regulatory protein RB5500 (246 aa).

This sequence belongs to the TACO1 family.

The protein localises to the cytoplasm. This is Probable transcriptional regulatory protein RB5500 from Rhodopirellula baltica (strain DSM 10527 / NCIMB 13988 / SH1).